We begin with the raw amino-acid sequence, 381 residues long: L-lactate dehydrogenase (381 aa).

Residues methionine 1 to lysine 380 form the FMN hydroxy acid dehydrogenase domain. Tyrosine 24 contacts substrate. FMN is bound by residues serine 106 and glutamine 127. Tyrosine 129 lines the substrate pocket. Threonine 155 is a binding site for FMN. Arginine 164 lines the substrate pocket. Residue lysine 251 coordinates FMN. The Proton acceptor role is filled by histidine 275. Arginine 278 contributes to the substrate binding site. Aspartate 306–arginine 330 is an FMN binding site.

This sequence belongs to the FMN-dependent alpha-hydroxy acid dehydrogenase family. FMN is required as a cofactor.

It is found in the cell inner membrane. The catalysed reaction is (S)-lactate + A = pyruvate + AH2. Its function is as follows. Catalyzes the conversion of L-lactate to pyruvate. Is coupled to the respiratory chain. The protein is L-lactate dehydrogenase of Actinobacillus pleuropneumoniae serotype 3 (strain JL03).